The sequence spans 247 residues: Cell division protein ZapD (247 aa).

It belongs to the ZapD family. Interacts with FtsZ.

The protein resides in the cytoplasm. In terms of biological role, cell division factor that enhances FtsZ-ring assembly. Directly interacts with FtsZ and promotes bundling of FtsZ protofilaments, with a reduction in FtsZ GTPase activity. This chain is Cell division protein ZapD, found in Shigella dysenteriae serotype 1 (strain Sd197).